The chain runs to 353 residues: Photosystem II D2 protein (353 aa).

The residue at position 2 (threonine 2) is an N-acetylthreonine. Threonine 2 is subject to Phosphothreonine. A helical membrane pass occupies residues 41–61 (CAYFALGGWFTGTTFVTSWYT). Histidine 118 contacts chlorophyll a. A helical membrane pass occupies residues 125 to 141 (GFMLRQFELARSVQLRP). Pheophytin a is bound by residues glutamine 130 and asparagine 143. Residues 153 to 166 (VFVSVFLIYPLGQS) form a helical membrane-spanning segment. Histidine 198 contacts chlorophyll a. The helical transmembrane segment at 208–228 (AALLCAIHGATVENTLFEDGD) threads the bilayer. Residues histidine 215 and phenylalanine 262 each contribute to the a plastoquinone site. Position 215 (histidine 215) interacts with Fe cation. Fe cation is bound at residue histidine 269. The helical transmembrane segment at 279 to 295 (GLWMSAIGVVGLALNLR) threads the bilayer.

This sequence belongs to the reaction center PufL/M/PsbA/D family. As to quaternary structure, PSII is composed of 1 copy each of membrane proteins PsbA, PsbB, PsbC, PsbD, PsbE, PsbF, PsbH, PsbI, PsbJ, PsbK, PsbL, PsbM, PsbT, PsbX, PsbY, PsbZ, Psb30/Ycf12, at least 3 peripheral proteins of the oxygen-evolving complex and a large number of cofactors. It forms dimeric complexes. Requires The D1/D2 heterodimer binds P680, chlorophylls that are the primary electron donor of PSII, and subsequent electron acceptors. It shares a non-heme iron and each subunit binds pheophytin, quinone, additional chlorophylls, carotenoids and lipids. There is also a Cl(-1) ion associated with D1 and D2, which is required for oxygen evolution. The PSII complex binds additional chlorophylls, carotenoids and specific lipids. as cofactor.

The protein localises to the plastid. Its subcellular location is the chloroplast thylakoid membrane. It catalyses the reaction 2 a plastoquinone + 4 hnu + 2 H2O = 2 a plastoquinol + O2. Its function is as follows. Photosystem II (PSII) is a light-driven water:plastoquinone oxidoreductase that uses light energy to abstract electrons from H(2)O, generating O(2) and a proton gradient subsequently used for ATP formation. It consists of a core antenna complex that captures photons, and an electron transfer chain that converts photonic excitation into a charge separation. The D1/D2 (PsbA/PsbD) reaction center heterodimer binds P680, the primary electron donor of PSII as well as several subsequent electron acceptors. D2 is needed for assembly of a stable PSII complex. This chain is Photosystem II D2 protein, found in Cycas taitungensis (Prince sago).